The sequence spans 611 residues: Virulence metalloprotease (611 aa).

The signal sequence occupies residues 1–25 (MKKVQRQMKWLFLAASISAALPVSA). The propeptide occupies 26–199 (AKMVQVDDPS…VLQTWEGLNH (174 aa)). Residue histidine 346 participates in Zn(2+) binding. Residue glutamate 347 is part of the active site. Zn(2+) is bound by residues histidine 350 and glutamate 370. Histidine 429 functions as the Proton donor in the catalytic mechanism.

The protein belongs to the peptidase M4 family. Requires Ca(2+) as cofactor. It depends on Zn(2+) as a cofactor. Post-translationally, seems to be more extensively processed.

The protein resides in the secreted. Extracellular zinc metalloprotease involved in the virulence mechanism of V.anguillarum. The protein is Virulence metalloprotease (empA) of Vibrio anguillarum (Listonella anguillarum).